The primary structure comprises 170 residues: Odorant-binding protein 2a (170 aa).

Positions 1–15 (MKTLFLGVTLGLAAA) are cleaved as a signal peptide. Cysteines 74 and 166 form a disulfide.

The protein belongs to the calycin superfamily. Lipocalin family. As to quaternary structure, monomer. Strongly expressed in the nasal structures, salivary and lachrymal glands, and lung. Expressed in the liver.

Its subcellular location is the secreted. Its function is as follows. Binds and transports small hydrophobic volatile molecules with a higher affinity for aldehydes and large fatty acids, including undecanal, palmitic acid, efficient aldehydes, benzenic aldehydes, heterocyclic aldehydes and aliphatic acids. The protein is Odorant-binding protein 2a (OBP2A) of Homo sapiens (Human).